The chain runs to 255 residues: Venom allergen-1 (255 aa).

A signal peptide spans 1–21; that stretch reads MASHVIVKFITAAILIGSCYA. An SCP domain is found at 65–210; that stretch reads LKKHNELRAE…VIKYYLVCNY (146 aa). N146 and N209 each carry an N-linked (GlcNAc...) asparagine glycan.

This sequence belongs to the CRISP family. As to quaternary structure, interacts with human LRPPRC; the interaction interrupts association between BECN1 and LRPPRC. Interacts with human CD4. (Microbial infection) Interacts with Zika virus envelope protein E and Zika virus-like particles; the interaction does not affect Zika virus replication in human endothelial cells and keratinocytes. Saliva (at protein level). Female salivary gland. No or low-level expression in female hemolymph, midgut, Malpighian tubule system and ovary. No or low-level expression in male tissues.

It is found in the secreted. The protein resides in the host endosome. The protein localises to the host mitochondrion. Activates autophagy in human monocytic cells, dendritic cells and macrophages. Promotes activation of human CD4(+) T-cells. Does not affect cytokine expression in human monocytic cells. Functionally, (Microbial infection) Promotes dengue virus type 2 replication in human monocytic cells, dendritic cells and macrophages. Pro-viral properties are linked to BECN1-mediated autophagy activation in the host. Does not directly interact with the purified envelope protein of dengue virus type 2. In terms of biological role, (Microbial infection) Promotes Zika virus replication in human monocytic cells, dendritic cells and macrophages. Facilitates Zika virus transmission from infected mosquitoes to the host in mouse model. Pro-viral properties are linked to BECN1-mediated autophagy activation in the host. Does not affect Zika virus replication in human endothelial cells and keratinocytes. Its function is as follows. (Microbial infection) Promotes Semliki Forest virus replication in human monocytic cells. (Microbial infection) Does not influence Batai virus replication in human monocytic cells. The polypeptide is Venom allergen-1 (Aedes aegypti (Yellowfever mosquito)).